The sequence spans 369 residues: Probable serine/threonine-protein kinase DDB_G0291350 (369 aa).

Residues 22 to 367 (YTVNRILGEG…QVIERINQII (346 aa)) enclose the Protein kinase domain. ATP-binding positions include 28–36 (LGEGGFSFV) and Lys-51. The Proton acceptor role is filled by Asp-159. The interval 169-225 (NLRRPSNNNNNNNNNNNNNNNNNNNNNNNNNNNNNNNNNNNNNNNNNNNNNNNSEDS) is disordered. Residues 175 to 221 (NNNNNNNNNNNNNNNNNNNNNNNNNNNNNNNNNNNNNNNNNNNNNNN) show a composition bias toward low complexity.

This sequence belongs to the protein kinase superfamily. Ser/Thr protein kinase family.

The catalysed reaction is L-seryl-[protein] + ATP = O-phospho-L-seryl-[protein] + ADP + H(+). The enzyme catalyses L-threonyl-[protein] + ATP = O-phospho-L-threonyl-[protein] + ADP + H(+). The protein is Probable serine/threonine-protein kinase DDB_G0291350 of Dictyostelium discoideum (Social amoeba).